A 516-amino-acid chain; its full sequence is MVTQVPSSTNILVIGGGPAGAYAAGVLVREGFEVTLLEKDFFPRYHIGESMLPSWRQFLRFIDMEEKMKNYGFLPKPGGAIKLNQDKREGYTDFIANNPENSAWNVVRSEFDQLLLNHVAEQGVKVYEGTRVDEIHFSPEEPTRPVSLTWSKDDKTRGDISFNWLVDASGRNGLMSTKYLKNRTFNRSLKNVAVWGYWTGTNRYAPGTNRENAPWFEALTDETGWVWFIPLHDGTTNVGVVLVEEDSKRKKAEYRAKHEGKSLAEVQYDRYMEDIQLAPGLIGLLGDGKFDGKLQAAGDYSYHASGYAGPHFRIAGDAGAFIDPFFSSGIHLAFTGGLSAACTIAASIRGHCTEEEASEFHSSKIKTAFTRFLFVVLGIYKQLRAQQSQILYEADEESLDRAILSLRPVIQGAADADADLTKEELENTLDFCKSVLEDEPQANGNGAAKQDAVPAPIPVALSSGAGPEKDAKRREIEAESLRSLQEMDDCKRNFGTEVINGFFVKMEQGVLGLVRA.

Positions 16, 19, and 49 each coordinate FAD. Residues Ser328 and Gly329 each coordinate chloride. Ile330 is an FAD binding site. Residues 440-475 (PQANGNGAAKQDAVPAPIPVALSSGAGPEKDAKRRE) are disordered.

This sequence belongs to the flavin-dependent halogenase family.

The enzyme catalyses melleolide F + FADH2 + chloride + O2 = 6'-chloromelleolide F + FAD + 2 H2O + H(+). Its function is as follows. Flavin-dependent halogenase involved in the biosynthesis of melleolides, a range of antifungal and phytotoxic polyketide derivatives composed of an orsellinic acid (OA) moiety esterified to various sesquiterpene alcohols. The halogenase catalyzes the transfer of a single chlorine atom to the melleolide backbone, resulting in a 6'-chloromelleolide product. The enzyme acts on free substrate and does not depend on carrier-protein-dependent acceptor molecules. The protein is Flavin-dependent halogenase armH2 of Armillaria mellea (Honey mushroom).